The primary structure comprises 150 residues: Cytochrome c oxidase subunit 5A, mitochondrial (150 aa).

The N-terminal 41 residues, 1–41 (MLGTALRRCAVAAASRAGPRGLQHPAPVPGPTAAIQSIRCY), are a transit peptide targeting the mitochondrion. The SIFI-degron signature appears at 2 to 17 (LGTALRRCAVAAASRA). N6-acetyllysine is present on residues K87 and K113. Phosphothreonine is present on T141.

The protein belongs to the cytochrome c oxidase subunit 5A family. In terms of assembly, component of the cytochrome c oxidase (complex IV, CIV), a multisubunit enzyme composed of 14 subunits. The complex is composed of a catalytic core of 3 subunits MT-CO1, MT-CO2 and MT-CO3, encoded in the mitochondrial DNA, and 11 supernumerary subunits COX4I, COX5A, COX5B, COX6A, COX6B, COX6C, COX7A, COX7B, COX7C, COX8 and NDUFA4, which are encoded in the nuclear genome. The complex exists as a monomer or a dimer and forms supercomplexes (SCs) in the inner mitochondrial membrane with NADH-ubiquinone oxidoreductase (complex I, CI) and ubiquinol-cytochrome c oxidoreductase (cytochrome b-c1 complex, complex III, CIII), resulting in different assemblies (supercomplex SCI(1)III(2)IV(1) and megacomplex MCI(2)III(2)IV(2)). Interacts with AFG1L. Interacts with RAB5IF. In terms of processing, in response to mitochondrial stress, the precursor protein is ubiquitinated by the SIFI complex in the cytoplasm before mitochondrial import, leading to its degradation. Within the SIFI complex, UBR4 initiates ubiquitin chain that are further elongated or branched by KCMF1.

The protein localises to the mitochondrion inner membrane. It participates in energy metabolism; oxidative phosphorylation. In terms of biological role, component of the cytochrome c oxidase, the last enzyme in the mitochondrial electron transport chain which drives oxidative phosphorylation. The respiratory chain contains 3 multisubunit complexes succinate dehydrogenase (complex II, CII), ubiquinol-cytochrome c oxidoreductase (cytochrome b-c1 complex, complex III, CIII) and cytochrome c oxidase (complex IV, CIV), that cooperate to transfer electrons derived from NADH and succinate to molecular oxygen, creating an electrochemical gradient over the inner membrane that drives transmembrane transport and the ATP synthase. Cytochrome c oxidase is the component of the respiratory chain that catalyzes the reduction of oxygen to water. Electrons originating from reduced cytochrome c in the intermembrane space (IMS) are transferred via the dinuclear copper A center (CU(A)) of subunit 2 and heme A of subunit 1 to the active site in subunit 1, a binuclear center (BNC) formed by heme A3 and copper B (CU(B)). The BNC reduces molecular oxygen to 2 water molecules using 4 electrons from cytochrome c in the IMS and 4 protons from the mitochondrial matrix. The polypeptide is Cytochrome c oxidase subunit 5A, mitochondrial (COX5A) (Nycticebus coucang (Slow loris)).